The primary structure comprises 146 residues: Large ribosomal subunit protein uL13 (146 aa).

It belongs to the universal ribosomal protein uL13 family. In terms of assembly, part of the 50S ribosomal subunit.

This protein is one of the early assembly proteins of the 50S ribosomal subunit, although it is not seen to bind rRNA by itself. It is important during the early stages of 50S assembly. In Malacoplasma penetrans (strain HF-2) (Mycoplasma penetrans), this protein is Large ribosomal subunit protein uL13.